The sequence spans 369 residues: Ubiquinone biosynthesis O-methyltransferase, mitochondrial (369 aa).

The N-terminal 85 residues, 1–85 (MWSGRKLGSS…SFRYPWARLY (85 aa)), are a transit peptide targeting the mitochondrion. Residue Arg124 participates in S-adenosyl-L-methionine binding. An N6-acetyllysine mark is found at Lys143 and Lys149. Residues Gly154 and Asp175 each contribute to the S-adenosyl-L-methionine site. N6-acetyllysine is present on Lys196. Ser222 lines the S-adenosyl-L-methionine pocket. Mg(2+) is bound by residues Glu223, Glu226, and His227.

This sequence belongs to the class I-like SAM-binding methyltransferase superfamily. UbiG/COQ3 family. As to quaternary structure, component of a multi-subunit COQ enzyme complex, composed of at least COQ3, COQ4, COQ5, COQ6, COQ7 and COQ9. Requires Mg(2+) as cofactor.

The protein localises to the mitochondrion inner membrane. The enzyme catalyses 3,4-dihydroxy-5-(all-trans-decaprenyl)benzoate + S-adenosyl-L-methionine = 4-hydroxy-3-methoxy-5-(all-trans-decaprenyl)benzoate + S-adenosyl-L-homocysteine + H(+). It carries out the reaction a 3-demethylubiquinone + S-adenosyl-L-methionine = a ubiquinone + S-adenosyl-L-homocysteine. The catalysed reaction is 3-demethylubiquinol-10 + S-adenosyl-L-methionine = ubiquinol-10 + S-adenosyl-L-homocysteine + H(+). Its pathway is cofactor biosynthesis; ubiquinone biosynthesis. Its function is as follows. O-methyltransferase required for two non-consecutive steps during ubiquinone biosynthesis. Catalyzes the 2 O-methylation of 3,4-dihydroxy-5-(all-trans-decaprenyl)benzoic acid into 4-hydroxy-3-methoxy-5-(all-trans-decaprenyl)benzoic acid. Also catalyzes the last step of ubiquinone biosynthesis by mediating methylation of 3-demethylubiquinone into ubiquinone. Also able to mediate the methylation of 3-demethylubiquinol-10 into ubiquinol-10. The polypeptide is Ubiquinone biosynthesis O-methyltransferase, mitochondrial (Homo sapiens (Human)).